The sequence spans 525 residues: tRNA-2-methylthio-N(6)-dimethylallyladenosine synthase (525 aa).

One can recognise an MTTase N-terminal domain in the interval 14 to 130; sequence RTYQVRTYGC…LPTLLERARH (117 aa). Positions 23, 59, 93, 167, 171, and 174 each coordinate [4Fe-4S] cluster. A Radical SAM core domain is found at 153–400; sequence RESAYAGWVS…IELQERISLE (248 aa). The TRAM domain occupies 403–482; sequence QAQVGRTLEL…PHHLIADGAL (80 aa).

The protein belongs to the methylthiotransferase family. MiaB subfamily. Monomer. The cofactor is [4Fe-4S] cluster.

It is found in the cytoplasm. The catalysed reaction is N(6)-dimethylallyladenosine(37) in tRNA + (sulfur carrier)-SH + AH2 + 2 S-adenosyl-L-methionine = 2-methylsulfanyl-N(6)-dimethylallyladenosine(37) in tRNA + (sulfur carrier)-H + 5'-deoxyadenosine + L-methionine + A + S-adenosyl-L-homocysteine + 2 H(+). Its function is as follows. Catalyzes the methylthiolation of N6-(dimethylallyl)adenosine (i(6)A), leading to the formation of 2-methylthio-N6-(dimethylallyl)adenosine (ms(2)i(6)A) at position 37 in tRNAs that read codons beginning with uridine. In Mycobacterium sp. (strain MCS), this protein is tRNA-2-methylthio-N(6)-dimethylallyladenosine synthase.